The sequence spans 335 residues: Glyceraldehyde-3-phosphate dehydrogenase 2 (335 aa).

Residues 13–14 (RI), aspartate 34, and methionine 79 each bind NAD(+). Residues 151–153 (SCT), threonine 182, 211–212 (TG), and arginine 234 contribute to the D-glyceraldehyde 3-phosphate site. The Nucleophile role is filled by cysteine 152. Asparagine 316 contributes to the NAD(+) binding site.

The protein belongs to the glyceraldehyde-3-phosphate dehydrogenase family. Homotetramer.

The protein localises to the cytoplasm. It carries out the reaction D-glyceraldehyde 3-phosphate + phosphate + NAD(+) = (2R)-3-phospho-glyceroyl phosphate + NADH + H(+). Its pathway is carbohydrate degradation; glycolysis; pyruvate from D-glyceraldehyde 3-phosphate: step 1/5. Functionally, glyceraldehyde-3-phosphate dehydrogenase is a key enzyme in glycolysis that catalyzes the first step of the pathway by converting D-glyceraldehyde 3-phosphate (G3P) into 3-phospho-D-glyceroyl phosphate. The protein is Glyceraldehyde-3-phosphate dehydrogenase 2 (gapdh-2) of Danio rerio (Zebrafish).